A 759-amino-acid polypeptide reads, in one-letter code: Short transient receptor potential channel 1 (759 aa).

The disordered stretch occupies residues 1–30; it reads MMAALYPSTDLSGASSSSLPSSPSSSSPNE. Over 1–352 the chain is Cytoplasmic; sequence MMAALYPSTD…GRIIHTPFMK (352 aa). The segment covering 15–28 has biased composition (low complexity); the sequence is SSSSLPSSPSSSSP. ANK repeat units follow at residues 46-75, 83-112, and 124-153; these read LNEK…SGDL, LGRN…QKLM, and MDVA…SLPK. The chain crosses the membrane as a helical span at residues 353–373; it reads FIIHGASYFTFLLLLNLYSLV. The Extracellular segment spans residues 374–381; the sequence is YNEDKKNT. Residues 382-402 form a helical membrane-spanning segment; sequence MGPALERIDYLLILWIIGMIW. The Cytoplasmic portion of the chain corresponds to 403–461; it reads SDIKRLWYEGLEDFLEESRNQLSFVMNSLYLATFALKVVAHNKFHDFADRKDWDAFHPT. A helical transmembrane segment spans residues 462 to 482; sequence LVAEGLFAFANVLSYLRLFFM. Over 483 to 505 the chain is Extracellular; sequence YTTSSILGPLQISMGQMLQDFGK. The chain crosses the membrane as a helical span at residues 506–526; it reads FLGMFLLVLFSFTIGLTQLYD. Residues 527–552 are Cytoplasmic-facing; it reads KGYTPKEQKDCVGIFCEQQSNDTFHS. Residues 553-573 form a helical membrane-spanning segment; that stretch reads FIGTCFALFWYIFSLAHVAIF. The Extracellular portion of the chain corresponds to 574–582; sequence VTRFSYGEE. Residues 583 to 603 traverse the membrane as a helical segment; the sequence is LQSFVGAVIVGTYNVVVVIVL. Topologically, residues 604–759 are cytoplasmic; the sequence is TKLLVAMLHK…SKYAMFYPRN (156 aa).

It belongs to the transient receptor (TC 1.A.4) family. STrpC subfamily. TRPC1 sub-subfamily. In terms of assembly, homotetramer and heterotetramer with TRPC4 and/or TRPC5. Interacts with TRPC4 and TRPC5. Interacts with ITPR3. Interacts with MX1 and RNF24. Interacts with FKBP4. Interacts with TRPC4AP. Interacts with PLSCR1. Interacts with PKD2L2. Forms a heterotetramer with PKD2 with a 2:2 stoichiometry; has distinct channel properties separate from PKD2 or TRPC1 homomers alone. Activation of PRKCA induces phosphorylation of TRPC1 and subsequent Ca2+ entry into cells.

It is found in the cell membrane. It catalyses the reaction Ca(2+)(in) = Ca(2+)(out). Forms a receptor-activated non-selective calcium permeant cation channel. Probably is operated by a phosphatidylinositol second messenger system activated by receptor tyrosine kinases or G-protein coupled receptors. Also activated by intracellular calcium store depletion. The protein is Short transient receptor potential channel 1 (TRPC1) of Oryctolagus cuniculus (Rabbit).